Here is a 317-residue protein sequence, read N- to C-terminus: Olfactory receptor 10AD1 (317 aa).

Residues 1–25 lie on the Extracellular side of the membrane; sequence MLRNGSIVTEFILVGFQQSSTSTRA. An N-linked (GlcNAc...) asparagine glycan is attached at asparagine 4. The helical transmembrane segment at 26-46 threads the bilayer; sequence LLFALFLALYSLTMAMNGLII. Residues 47-55 are Cytoplasmic-facing; the sequence is FITSWTDPK. The helical transmembrane segment at 56–76 threads the bilayer; it reads LNSPMYFFLGHLSLLDVCFIT. At 77-100 the chain is on the extracellular side; that stretch reads TTIPQMLIHLVVRDHIVSFVCCMT. Cysteine 98 and cysteine 190 are joined by a disulfide. The helical transmembrane segment at 101 to 121 threads the bilayer; the sequence is QMYFVFCVGVAECILLAFMAY. Residues 122 to 140 lie on the Cytoplasmic side of the membrane; sequence DRYVAICYPLNYVPIISQK. Residues 141–161 form a helical membrane-spanning segment; that stretch reads VCVRLVGTAWFFGLINGIFLE. The Extracellular segment spans residues 162 to 198; sequence YISFREPFRRDNHIESFFCEAPIVIGLSCGDPQFSLW. The chain crosses the membrane as a helical span at residues 199–218; the sequence is AIFADAIVVILSPMVLTVTS. At 219-238 the chain is on the cytoplasmic side; that stretch reads YVHILATILSKASSSGRGKT. Residues 239–259 form a helical membrane-spanning segment; the sequence is FSTCASHLTVVIFLYTSAMFS. At 260-272 the chain is on the extracellular side; it reads YMNPHSTHGPDKD. The helical transmembrane segment at 273–293 threads the bilayer; sequence KPFSLLYTIITPMCNPIIYSF. The Cytoplasmic segment spans residues 294–317; that stretch reads RNKEIKEAMVRALGRTRLAQPQSV.

Belongs to the G-protein coupled receptor 1 family.

The protein resides in the cell membrane. In terms of biological role, odorant receptor. This is Olfactory receptor 10AD1 (OR10AD1) from Homo sapiens (Human).